A 688-amino-acid polypeptide reads, in one-letter code: Translation initiation factor IF-2 (688 aa).

The segment at 53–101 (GAEKPSVADEFEVEEKVVRSKKNSNKNKKKGKANEDKRQDNFAGRQQTP) is disordered. A compositionally biased stretch (basic residues) spans 71 to 83 (RSKKNSNKNKKKG). The 170-residue stretch at 190–359 (ERPAVVTIMG…LLVSEVEEYK (170 aa)) folds into the tr-type G domain. The segment at 199–206 (GHVDHGKT) is G1. 199–206 (GHVDHGKT) serves as a coordination point for GTP. Positions 224 to 228 (GITQH) are G2. The G3 stretch occupies residues 245 to 248 (DTPG). Residues 245-249 (DTPGH) and 299-302 (NKMD) contribute to the GTP site. Residues 299–302 (NKMD) form a G4 region. Residues 335-337 (SAI) are G5.

It belongs to the TRAFAC class translation factor GTPase superfamily. Classic translation factor GTPase family. IF-2 subfamily.

It is found in the cytoplasm. In terms of biological role, one of the essential components for the initiation of protein synthesis. Protects formylmethionyl-tRNA from spontaneous hydrolysis and promotes its binding to the 30S ribosomal subunits. Also involved in the hydrolysis of GTP during the formation of the 70S ribosomal complex. The sequence is that of Translation initiation factor IF-2 from Bacillus mycoides (strain KBAB4) (Bacillus weihenstephanensis).